We begin with the raw amino-acid sequence, 636 residues long: Molybdenum cofactor biosynthesis protein 1 (636 aa).

The interval 1–383 (MAARPAFGIV…QMKNRPMILI (383 aa)) is molybdenum cofactor biosynthesis protein A. Positions 19-40 (RGCSSGAPVTQPRPGEPSRPTR) are disordered. Ser-64 bears the Phosphoserine mark. A Radical SAM core domain is found at 64-279 (SFGRQHSYLR…TIRQRWPGLE (216 aa)). Residue Arg-73 coordinates GTP. [4Fe-4S] cluster contacts are provided by Cys-80 and Cys-84. Tyr-86 provides a ligand contact to S-adenosyl-L-methionine. Position 87 (Cys-87) interacts with [4Fe-4S] cluster. Residue Arg-123 participates in GTP binding. Gly-127 contributes to the S-adenosyl-L-methionine binding site. Position 154 (Thr-154) interacts with GTP. Ser-178 contributes to the S-adenosyl-L-methionine binding site. N6-acetyllysine is present on Lys-198. Lys-215 contributes to the GTP binding site. Met-249 provides a ligand contact to S-adenosyl-L-methionine. Residues Cys-312 and Cys-315 each contribute to the [4Fe-4S] cluster site. A GTP-binding site is contributed by 317–319 (RLR). Cys-329 is a binding site for [4Fe-4S] cluster. The tract at residues 414-636 (QCLSDQMASL…GGQRGDFHRA (223 aa)) is molybdenum cofactor biosynthesis protein C. The interval 444–484 (SPQRHYSSYPDPDTHSKCLSTGSQAPDAPSGPGPTSNQLTH) is disordered. Lys-528 carries the N6-acetyllysine modification. Asp-606 acts as the For molybdenum cofactor biosynthesis protein C activity in catalysis.

In the C-terminal section; belongs to the MoaC family. It in the N-terminal section; belongs to the radical SAM superfamily. MoaA family. Isoform Mocs1a and isoform Mocs1b probably form a heterooligomer. The cofactor is [4Fe-4S] cluster.

The catalysed reaction is GTP + AH2 + S-adenosyl-L-methionine = (8S)-3',8-cyclo-7,8-dihydroguanosine 5'-triphosphate + 5'-deoxyadenosine + L-methionine + A + H(+). It catalyses the reaction (8S)-3',8-cyclo-7,8-dihydroguanosine 5'-triphosphate = cyclic pyranopterin phosphate + diphosphate. It functions in the pathway cofactor biosynthesis; molybdopterin biosynthesis. Its function is as follows. Isoform Mocs1a and isoform Mocs1b probably form a complex that catalyzes the conversion of 5'-GTP to cyclic pyranopterin monophosphate (cPMP). Mocs1a catalyzes the cyclization of GTP to (8S)-3',8-cyclo-7,8-dihydroguanosine 5'-triphosphate and Mocs1b catalyzes the subsequent conversion of (8S)-3',8-cyclo-7,8-dihydroguanosine 5'-triphosphate to cPMP. The polypeptide is Molybdenum cofactor biosynthesis protein 1 (Mocs1) (Mus musculus (Mouse)).